Consider the following 109-residue polypeptide: Iron-sulfur cluster assembly protein CyaY (109 aa).

It belongs to the frataxin family.

Functionally, involved in iron-sulfur (Fe-S) cluster assembly. May act as a regulator of Fe-S biogenesis. This Bordetella pertussis (strain Tohama I / ATCC BAA-589 / NCTC 13251) protein is Iron-sulfur cluster assembly protein CyaY.